Reading from the N-terminus, the 179-residue chain is Translation initiation factor IF-3 (179 aa).

This sequence belongs to the IF-3 family. In terms of assembly, monomer.

It localises to the cytoplasm. In terms of biological role, IF-3 binds to the 30S ribosomal subunit and shifts the equilibrium between 70S ribosomes and their 50S and 30S subunits in favor of the free subunits, thus enhancing the availability of 30S subunits on which protein synthesis initiation begins. This chain is Translation initiation factor IF-3, found in Leptospira interrogans serogroup Icterohaemorrhagiae serovar copenhageni (strain Fiocruz L1-130).